The sequence spans 254 residues: Vitamin B12 import ATP-binding protein BtuD (254 aa).

The ABC transporter domain maps to 3–239 (INYISVGNRL…ENLQQVFETP (237 aa)). Position 29 to 36 (29 to 36 (GPNGSGKS)) interacts with ATP.

It belongs to the ABC transporter superfamily. Vitamin B12 importer (TC 3.A.1.13.1) family. In terms of assembly, the complex is composed of two ATP-binding proteins (BtuD), two transmembrane proteins (BtuC) and a solute-binding protein (BtuF).

It localises to the cell inner membrane. It carries out the reaction an R-cob(III)alamin(out) + ATP + H2O = an R-cob(III)alamin(in) + ADP + phosphate + H(+). Its function is as follows. Part of the ABC transporter complex BtuCDF involved in vitamin B12 import. Responsible for energy coupling to the transport system. This Vibrio vulnificus (strain CMCP6) protein is Vitamin B12 import ATP-binding protein BtuD.